The following is a 504-amino-acid chain: MSEIVTYEDALKDFEPIIGLEVHVELSTQTKLFSSAPNIAGPLASCASQGPNTLVTPVCLGLPGSLPTVNERAVDYGIALGLALGCSIADELIFARKNYFYPDLPKNYQISQFDSPLAYDGKLEVETESGDVFFVEIERAHLEEDAGKLAHKSSTGRIQGAQYSLIDYNRSGVPLVEIVSRPVFADRCAPQVARAFVELIREIVLSLGVSNARLERGNIRCDANVSLRPRGLGAGILPNRTETKNLNSLRSIERAIRYEIQRQATLISSGELVRQETRHWREDRGITLSGRVKADSHEYRYFPEPDLLPIPIPSDKVEAIRLSMPEHPLALRRRLKAEWKFSDLQFRDVLNSSVLKQVDETVRAGATPDGAKKWWTGEITRIASQRRCNASDLISPEAVAEIELLISKGILNDSLARKVLAAVIDESLSVQQAIEKYDLSLTESASVERVLEKVLSENQEVVQKVISGKTQAVGVLVGSCMKTLGGKADASKLRQTILNRLLPR.

This sequence belongs to the GatB/GatE family. GatB subfamily. Heterotrimer of A, B and C subunits.

It catalyses the reaction L-glutamyl-tRNA(Gln) + L-glutamine + ATP + H2O = L-glutaminyl-tRNA(Gln) + L-glutamate + ADP + phosphate + H(+). It carries out the reaction L-aspartyl-tRNA(Asn) + L-glutamine + ATP + H2O = L-asparaginyl-tRNA(Asn) + L-glutamate + ADP + phosphate + 2 H(+). Its function is as follows. Allows the formation of correctly charged Asn-tRNA(Asn) or Gln-tRNA(Gln) through the transamidation of misacylated Asp-tRNA(Asn) or Glu-tRNA(Gln) in organisms which lack either or both of asparaginyl-tRNA or glutaminyl-tRNA synthetases. The reaction takes place in the presence of glutamine and ATP through an activated phospho-Asp-tRNA(Asn) or phospho-Glu-tRNA(Gln). The protein is Aspartyl/glutamyl-tRNA(Asn/Gln) amidotransferase subunit B of Tropheryma whipplei (strain TW08/27) (Whipple's bacillus).